The chain runs to 477 residues: ATP synthase subunit beta (477 aa).

Residue 163 to 170 participates in ATP binding; sequence GGAGVGKT.

Belongs to the ATPase alpha/beta chains family. F-type ATPases have 2 components, CF(1) - the catalytic core - and CF(0) - the membrane proton channel. CF(1) has five subunits: alpha(3), beta(3), gamma(1), delta(1), epsilon(1). CF(0) has four main subunits: a(1), b(1), b'(1) and c(9-12).

It localises to the cellular thylakoid membrane. It carries out the reaction ATP + H2O + 4 H(+)(in) = ADP + phosphate + 5 H(+)(out). Produces ATP from ADP in the presence of a proton gradient across the membrane. The catalytic sites are hosted primarily by the beta subunits. This chain is ATP synthase subunit beta, found in Synechococcus sp. (strain JA-2-3B'a(2-13)) (Cyanobacteria bacterium Yellowstone B-Prime).